An 869-amino-acid polypeptide reads, in one-letter code: Eukaryotic translation initiation factor 3 subunit C (869 aa).

Disordered regions lie at residues 1–92 and 182–242; these read MSRF…KSAK and IKKA…VGKG. Over residues 14 to 55 the composition is skewed to acidic residues; the sequence is SSDEEEDLYSDDEEVQEQPEEESSEDDSEEDDDDDDDSDSSS. The segment covering 185 to 203 has biased composition (basic and acidic residues); the sequence is ASKEHQKDIDSFRADKDAY. The 175-residue stretch at 607-781 folds into the PCI domain; the sequence is FHMHINLELL…SSIIFRKGVE (175 aa). The interval 803-869 is disordered; that stretch reads NERTLETRTQ…ALGAAVGSRA (67 aa). Residues 823 to 843 are compositionally biased toward gly residues; sequence GRGGRGGNRGGRGGGRGGRGG.

The protein belongs to the eIF-3 subunit C family. As to quaternary structure, component of the eukaryotic translation initiation factor 3 (eIF-3) complex.

The protein localises to the cytoplasm. Its function is as follows. Component of the eukaryotic translation initiation factor 3 (eIF-3) complex, which is involved in protein synthesis of a specialized repertoire of mRNAs and, together with other initiation factors, stimulates binding of mRNA and methionyl-tRNAi to the 40S ribosome. The eIF-3 complex specifically targets and initiates translation of a subset of mRNAs involved in cell proliferation. The protein is Eukaryotic translation initiation factor 3 subunit C (nip1) of Botryotinia fuckeliana (strain B05.10) (Noble rot fungus).